The chain runs to 270 residues: 4-hydroxy-tetrahydrodipicolinate reductase (270 aa).

NAD(+) contacts are provided by residues 8–13 and Glu-34; that span reads GAAGRM. Arg-35 contacts NADP(+). NAD(+) contacts are provided by residues 98–100 and 122–125; these read GST and SPNM. His-155 functions as the Proton donor/acceptor in the catalytic mechanism. Residue His-156 participates in (S)-2,3,4,5-tetrahydrodipicolinate binding. Lys-159 (proton donor) is an active-site residue. A (S)-2,3,4,5-tetrahydrodipicolinate-binding site is contributed by 165-166; the sequence is GT.

Belongs to the DapB family.

Its subcellular location is the cytoplasm. The enzyme catalyses (S)-2,3,4,5-tetrahydrodipicolinate + NAD(+) + H2O = (2S,4S)-4-hydroxy-2,3,4,5-tetrahydrodipicolinate + NADH + H(+). The catalysed reaction is (S)-2,3,4,5-tetrahydrodipicolinate + NADP(+) + H2O = (2S,4S)-4-hydroxy-2,3,4,5-tetrahydrodipicolinate + NADPH + H(+). The protein operates within amino-acid biosynthesis; L-lysine biosynthesis via DAP pathway; (S)-tetrahydrodipicolinate from L-aspartate: step 4/4. Catalyzes the conversion of 4-hydroxy-tetrahydrodipicolinate (HTPA) to tetrahydrodipicolinate. The polypeptide is 4-hydroxy-tetrahydrodipicolinate reductase (Anaeromyxobacter dehalogenans (strain 2CP-1 / ATCC BAA-258)).